The primary structure comprises 802 residues: Copper-exporting P-type ATPase (802 aa).

HMA domains follow at residues 5 to 70 (KKTT…YGVA) and 72 to 138 (ETVE…YDAS). Positions 16, 19, 83, and 86 each coordinate Cu(+). The next 6 helical transmembrane spans lie at 161-181 (LIIS…HLFN), 192-212 (WFQF…FYVG), 224-244 (MDVL…YEMI), 256-276 (LYFE…YLEA), 411-431 (YFVP…ITLV), and 438-458 (PALV…LGLA). Catalysis depends on Asp495, which acts as the 4-aspartylphosphate intermediate. Mg(2+) contacts are provided by Asp690 and Asp694. Transmembrane regions (helical) follow at residues 748–767 (LFWA…LGLL) and 771–790 (VAGA…ALRL).

The protein belongs to the cation transport ATPase (P-type) (TC 3.A.3) family. Type IB subfamily.

The protein localises to the cell membrane. The catalysed reaction is Cu(+)(in) + ATP + H2O = Cu(+)(out) + ADP + phosphate + H(+). Its function is as follows. Involved in copper export. The polypeptide is Copper-exporting P-type ATPase (copA) (Staphylococcus aureus (strain bovine RF122 / ET3-1)).